The following is a 480-amino-acid chain: Proline--tRNA ligase (480 aa).

This sequence belongs to the class-II aminoacyl-tRNA synthetase family. ProS type 3 subfamily. In terms of assembly, homodimer.

The protein resides in the cytoplasm. The enzyme catalyses tRNA(Pro) + L-proline + ATP = L-prolyl-tRNA(Pro) + AMP + diphosphate. Its function is as follows. Catalyzes the attachment of proline to tRNA(Pro) in a two-step reaction: proline is first activated by ATP to form Pro-AMP and then transferred to the acceptor end of tRNA(Pro). The sequence is that of Proline--tRNA ligase from Roseiflexus sp. (strain RS-1).